The primary structure comprises 515 residues: Bifunctional purine biosynthesis protein PurH (515 aa).

Positions 1–145 constitute an MGS-like domain; sequence MTKRALISVS…KNHASVTVVV (145 aa).

It belongs to the PurH family.

The catalysed reaction is (6R)-10-formyltetrahydrofolate + 5-amino-1-(5-phospho-beta-D-ribosyl)imidazole-4-carboxamide = 5-formamido-1-(5-phospho-D-ribosyl)imidazole-4-carboxamide + (6S)-5,6,7,8-tetrahydrofolate. The enzyme catalyses IMP + H2O = 5-formamido-1-(5-phospho-D-ribosyl)imidazole-4-carboxamide. It participates in purine metabolism; IMP biosynthesis via de novo pathway; 5-formamido-1-(5-phospho-D-ribosyl)imidazole-4-carboxamide from 5-amino-1-(5-phospho-D-ribosyl)imidazole-4-carboxamide (10-formyl THF route): step 1/1. Its pathway is purine metabolism; IMP biosynthesis via de novo pathway; IMP from 5-formamido-1-(5-phospho-D-ribosyl)imidazole-4-carboxamide: step 1/1. This is Bifunctional purine biosynthesis protein PurH from Streptococcus suis.